The primary structure comprises 492 residues: MTATSGKLMKGATGDWEVVIGMEIHAQVTSKSKLFSGASTAFGGDPNSHVSLVDVAMPGMLPVINEECVRQAVRTGLGLNAKINLRSVFDRKNYFYPDLPQGYQISQYKDPIVGEGEVTVELDGGKTATIGIERLHLEQDPGKMLHDQSPSLSYIDYNRCGVALMEIVSKPDIRDAEQAKAYVTKLRSILRYLGTCDGDMEKGSLRADVNVSVRKPGGPLGTRCEIKNINSISFIGQAVEAEARRQIEIIEDGGTIEQETRRFDPDKGETRSMRSKEEAHDYRYFPDPDLLPLEFDQAFVDALKAALPELPDQKKARFIADFGLSPYDASVLVAERESAAFYESVLEALSDRGRDGKLAANWVINELFGRLNKEGRDIASSPVSSAQLAAIVALIGEGTISGKIAKDLFEIVWSEGGDPRELVESRGMKQVTDLGAIEKVVDEIIAANPDKVAQAKAKPQLAGWFVGQVMKSSGGKANPQAVNDLLKSKLGI.

The protein belongs to the GatB/GatE family. GatB subfamily. In terms of assembly, heterotrimer of A, B and C subunits.

The enzyme catalyses L-glutamyl-tRNA(Gln) + L-glutamine + ATP + H2O = L-glutaminyl-tRNA(Gln) + L-glutamate + ADP + phosphate + H(+). The catalysed reaction is L-aspartyl-tRNA(Asn) + L-glutamine + ATP + H2O = L-asparaginyl-tRNA(Asn) + L-glutamate + ADP + phosphate + 2 H(+). Its function is as follows. Allows the formation of correctly charged Asn-tRNA(Asn) or Gln-tRNA(Gln) through the transamidation of misacylated Asp-tRNA(Asn) or Glu-tRNA(Gln) in organisms which lack either or both of asparaginyl-tRNA or glutaminyl-tRNA synthetases. The reaction takes place in the presence of glutamine and ATP through an activated phospho-Asp-tRNA(Asn) or phospho-Glu-tRNA(Gln). The polypeptide is Aspartyl/glutamyl-tRNA(Asn/Gln) amidotransferase subunit B (Bradyrhizobium sp. (strain BTAi1 / ATCC BAA-1182)).